Reading from the N-terminus, the 234-residue chain is MQTPPESTDVKLDTLNEPSAHLIEKNVALPKDIFRSYLSYWIYEIARYTPVMILSLVIGVLVLLIIFFNDNEACVFNSAIFAFTSLVGLLIILSDGNPKLVSRRNFRTELLVDVITRKPAVEGKEWRIITYNMNQYLFNHGQWHTPYYFYSDEDCYRYFLRLVEGVTPKKQTATSIGNSPVTAKPEDAIESASPSSRLNYQNFLLKAAEIERQAQENYWRRRHPNIDALLKKTE.

At 1 to 47 the chain is on the cytoplasmic side; that stretch reads MQTPPESTDVKLDTLNEPSAHLIEKNVALPKDIFRSYLSYWIYEIAR. At threonine 3 the chain carries Phosphothreonine. A helical transmembrane segment spans residues 48-68; sequence YTPVMILSLVIGVLVLLIIFF. Residues 69–72 lie on the Extracellular side of the membrane; the sequence is NDNE. A helical membrane pass occupies residues 73–93; that stretch reads ACVFNSAIFAFTSLVGLLIIL. At 94-234 the chain is on the cytoplasmic side; it reads SDGNPKLVSR…NIDALLKKTE (141 aa). Residues 231–234 are COPI binding; it reads KKTE.

The protein belongs to the DUP/COS family. Interacts with MST27. Binds to coatomer proteins of COPI and SEC23/SEC24 of COPII coated vesicles.

Its subcellular location is the endoplasmic reticulum. The protein localises to the golgi apparatus. The protein resides in the cytoplasmic vesicle. It is found in the COPI-coated vesicle membrane. It localises to the COPII-coated vesicle membrane. Involved in protein trafficking vesicle formation, probably by stabilizing of coatomer at the Golgi membrane and thus allowing the efficient formation of COPI coated vesicles. In Saccharomyces cerevisiae (strain ATCC 204508 / S288c) (Baker's yeast), this protein is Multicopy suppressor of SEC21 protein 28 (MST28).